The chain runs to 309 residues: D-alanine--D-alanine ligase (309 aa).

Residues K105–A304 form the ATP-grasp domain. Position 135 to 190 (L135 to T190) interacts with ATP. Residues D258, E271, and N273 each coordinate Mg(2+).

Belongs to the D-alanine--D-alanine ligase family. Mg(2+) serves as cofactor. The cofactor is Mn(2+).

It is found in the cytoplasm. It catalyses the reaction 2 D-alanine + ATP = D-alanyl-D-alanine + ADP + phosphate + H(+). It functions in the pathway cell wall biogenesis; peptidoglycan biosynthesis. Cell wall formation. This chain is D-alanine--D-alanine ligase, found in Idiomarina loihiensis (strain ATCC BAA-735 / DSM 15497 / L2-TR).